A 240-amino-acid chain; its full sequence is Mitochondrial transcription rescue factor 1 (240 aa).

A mitochondrion-targeting transit peptide spans 1–84 (MAMASVKLLA…ECIFPFSVRL (84 aa)). A disordered region spans residues 95–127 (KKSLQKVDEEDSDEESHHDEMSEQEEELEDDPT). A phosphoserine mark is found at Ser106 and Ser116. The segment covering 116–126 (SEQEEELEDDP) has biased composition (acidic residues). One can recognise an S4 RNA-binding domain in the interval 142–217 (FRYDVVLKTG…LKKVFEEKTE (76 aa)).

Monomer. Interacts with POLRMT. Interacts (via S4 domain) with MTRFR (via C-terminus). Associates with mitoribosomal S39 large subunit, peptidyl tRNA and nascent chain.

It localises to the mitochondrion matrix. Mitochondrial RNA-binding protein involved in mitochondrial transcription regulation. Functions as a protective factor to maintain proper mitochondrial RNA level during stress. Acts at the transcription level and its protective function depends on its RNA binding ability. Part of a mitoribosome-associated quality control pathway that prevents aberrant translation by responding to interruptions during elongation. As heterodimer with MTRF, ejects the unfinished nascent chain and peptidyl transfer RNA (tRNA), respectively, from stalled ribosomes. Recruitment of mitoribosome biogenesis factors to these quality control intermediates suggests additional roles for MTRES1 and MTRF during mitoribosome rescue. The sequence is that of Mitochondrial transcription rescue factor 1 from Homo sapiens (Human).